The primary structure comprises 312 residues: 2-aminophenol 1,6-dioxygenase subunit beta (312 aa).

Positions 13, 62, and 251 each coordinate Fe cation.

This sequence belongs to the LigB/MhpB extradiol dioxygenase family. In terms of assembly, the APD complex is a heterotetramer of 2 alpha (CnbCa) and 2 beta (CnbCb) subunits. It depends on Fe(2+) as a cofactor.

It carries out the reaction 2-aminophenol + O2 = 2-aminomuconate 6-semialdehyde. It catalyses the reaction 2-amino-5-chlorophenol + O2 = 2-amino-5-chloromuconate 6-semialdehyde. Its pathway is xenobiotic degradation; nitrobenzene degradation. The protein operates within xenobiotic degradation; 4-chloronitrobenzene degradation. Its activity is regulated as follows. Complete loss of activity in the presence of Ni(2+), Co(2+), Cd(2+), Zn(2+) and hydrogen peroxide, however activity with hydrogen peroxide partially restored upon addition of excess ascorbate. Partially inhibited by Fe(2+), Mg(2+), Ca(2+), Mn(2+), Cu(2+) and also by EDTA, at 2 mM concentration. Total activity inhibited in the presence of catechol or 4-nitrocatechol but completely restored after removal of catechol and addition of 2 mM Fe(2+) and 5 mM ascorbate. In terms of biological role, component of the 2-aminophenol 1,6-dioxygenase (APD) complex that catalyzes the ring fission of 2-aminophenol to produce 2-aminomuconic semialdehyde. CnbCb seems to be the catalytic subunit of the complex. Also active on other substrates such as 2-amino-5-chlorophenol (68% activity), protocatechuate (33% activity) and catechol (5% activity). Both 2-aminophenol and 2-amino-5-cholorophenol are likely native substrates for this dioxygenase which is involved in the reductive degradation pathway of both nitrobenzene (NB) and 4-chloronitrobenzene (4-CNB), allowing C.testosteroni strain CNB-1 to grow on these compounds as sole source of carbon, nitrogen, and energy. The sequence is that of 2-aminophenol 1,6-dioxygenase subunit beta from Comamonas testosteroni (Pseudomonas testosteroni).